The following is a 528-amino-acid chain: Carboxysome shell carbonic anhydrase (528 aa).

Positions 17-47 (PIAPNPRWQKENPTAHGSTDTGGFGYNGGNE) are disordered. Residue Cys184 participates in Zn(2+) binding. Asp186 functions as the Proton acceptor in the catalytic mechanism. Zn(2+) contacts are provided by His252 and Cys263.

This sequence belongs to the beta-class carbonic anhydrase family. CsoSCA subfamily. Homodimer. Requires Zn(2+) as cofactor.

It is found in the carboxysome. It carries out the reaction hydrogencarbonate + H(+) = CO2 + H2O. Its activity is regulated as follows. Inhibited by ethoxyzolamide and dithiothreitol (in crude extracts upon expression in E.coli). Reversible hydration of carbon dioxide. This bacteria encodes at least 3 CA enzymes. Essential for chemolithotrophic carbon dioxide fixation, supplies CO(2) to RuBisCO (ribulose bisphosphate carboxylase, cbbL-cbbS) in the carboxysome. This is Carboxysome shell carbonic anhydrase from Hydrogenovibrio crunogenus (strain DSM 25203 / XCL-2) (Thiomicrospira crunogena).